We begin with the raw amino-acid sequence, 422 residues long: Sphingomyelin phosphodiesterase 2 (422 aa).

Mg(2+) is bound at residue glutamate 49. Histidine 272 acts as the Proton acceptor in catalysis. 2 helical membrane-spanning segments follow: residues 325 to 345 and 354 to 374; these read ALFG…CVLA and AIML…VYLF. Residues 397-422 form a disordered region; that stretch reads TETQDLGSEPHPTHCRQQEADRAEEK. A compositionally biased stretch (basic and acidic residues) spans 412–422; it reads RQQEADRAEEK.

This sequence belongs to the neutral sphingomyelinase family. Requires Mg(2+) as cofactor.

It is found in the membrane. The catalysed reaction is a sphingomyelin + H2O = phosphocholine + an N-acylsphing-4-enine + H(+). It carries out the reaction 1-O-octadecyl-sn-glycero-3-phosphocholine + H2O = 1-O-octadecyl-sn-glycerol + phosphocholine + H(+). The enzyme catalyses an N-(acyl)-sphingosylphosphocholine + H2O = an N-acyl-sphingoid base + phosphocholine + H(+). It catalyses the reaction 1-hexadecanoyl-sn-glycero-3-phosphocholine + H2O = 1-hexadecanoyl-sn-glycerol + phosphocholine + H(+). The catalysed reaction is a sphingosylphosphocholine + H2O = a sphingoid base + phosphocholine + H(+). It carries out the reaction 1-O-hexadecyl-sn-glycero-3-phosphocholine + H2O = 1-O-hexadecyl-sn-glycerol + phosphocholine + H(+). It participates in lipid metabolism; sphingolipid metabolism. In terms of biological role, catalyzes the hydrolysis of sphingomyelin to form ceramide and phosphocholine. Ceramide mediates numerous cellular functions, such as apoptosis and growth arrest, and is capable of regulating these 2 cellular events independently. Also hydrolyzes sphingosylphosphocholine. Hydrolyze 1-acyl-2-lyso-sn-glycero-3-phosphocholine (lyso-PC) and 1-O-alkyl-2-lyso-sn-glycero-3-phosphocholine (lyso-platelet-activating factor). The protein is Sphingomyelin phosphodiesterase 2 (Smpd2) of Rattus norvegicus (Rat).